The chain runs to 179 residues: Repressor of phase 1 flagellin gene (179 aa).

Functionally, transcriptional repressor of the FliC phase-1 flagellin. This Salmonella abony protein is Repressor of phase 1 flagellin gene (fljA).